The following is a 522-amino-acid chain: MSDRVIIFDTTLRDGEQALAASLSVKEKLQVALALERLGVDVMEVGFPVSSPGDFESVQTIARHIKNSRVCALSRALEKDIDAAAQALSVAEQFRIHTFISTSNIHVESKLKRSFDQVLDMAVGAVKYARRFTDDVEFSCEDAGRTPIDNLCRMVEAAISAGARTINIPDTVGYTVPSEFGGIIQTLFNRVPNIDQAVISVHCHDDLGLSVANSIAAVQAGARQIECTVNGIGERAGNCSLEEIAMILATRKDMLGLYTNINAREIHRTSSLVSQLCNMPIQPNKAIVGSNAFTHSSGIHQDGMLKAQNTYEIMTPESIGLNRNNLNMTSRSGRHVIKHRMEEMGYGAGDYDMDTLYAAFLKLADKKGQVFDYDLEALAFMEAQAEDDDHYVMEQLVVQSDSTEGKATATVRMRVGDEVITEAATGNGPVDAAYNAIARATHRTINISSYKLGAKGEGQNALGQVDITARYDDRNFHGVGLATDVVEASAQALVHVMNLTWRADKVAYCKQQMQQTRELGGV.

The 263-residue stretch at 5–267 (VIIFDTTLRD…YTNINAREIH (263 aa)) folds into the Pyruvate carboxyltransferase domain. Asp-14, His-202, His-204, and Asn-238 together coordinate Mn(2+). The regulatory domain stretch occupies residues 392 to 522 (VMEQLVVQSD…MQQTRELGGV (131 aa)).

Belongs to the alpha-IPM synthase/homocitrate synthase family. LeuA type 1 subfamily. Homodimer. Mn(2+) serves as cofactor.

It is found in the cytoplasm. The enzyme catalyses 3-methyl-2-oxobutanoate + acetyl-CoA + H2O = (2S)-2-isopropylmalate + CoA + H(+). Its pathway is amino-acid biosynthesis; L-leucine biosynthesis; L-leucine from 3-methyl-2-oxobutanoate: step 1/4. Its function is as follows. Catalyzes the condensation of the acetyl group of acetyl-CoA with 3-methyl-2-oxobutanoate (2-ketoisovalerate) to form 3-carboxy-3-hydroxy-4-methylpentanoate (2-isopropylmalate). The polypeptide is 2-isopropylmalate synthase (Shewanella amazonensis (strain ATCC BAA-1098 / SB2B)).